An 85-amino-acid polypeptide reads, in one-letter code: Electron transfer flavoprotein regulatory factor 1 homolog (85 aa).

The protein belongs to the complex I LYR family. As to expression, highly expressed in the larval fat body.

The protein localises to the mitochondrion. Acts as a regulator of the electron transfer flavoprotein by promoting the removal of flavin from the ETF holoenzyme. May act with the ETF complex to coordinate lipid homeostasis in the fat body in response to stage-specific demands. This chain is Electron transfer flavoprotein regulatory factor 1 homolog, found in Drosophila melanogaster (Fruit fly).